The following is a 332-amino-acid chain: Beta-1,3-N-acetylglucosaminyltransferase radical fringe (332 aa).

Over Met-1–Arg-6 the chain is Cytoplasmic. Residues Val-7–Leu-29 traverse the membrane as a helical; Signal-anchor for type II membrane protein segment. The Lumenal segment spans residues Pro-30–Gln-332. Position 75 (Arg-75) interacts with substrate. The N-linked (GlcNAc...) asparagine glycan is linked to Asn-114. 2 cysteine pairs are disulfide-bonded: Cys-115-Cys-126 and Cys-144-Cys-208. Residue Asp-148 participates in substrate binding. A Mn(2+)-binding site is contributed by Asp-149. Residue Asp-238 is part of the active site. His-262 contacts Mn(2+). A disulfide bridge links Cys-312 with Cys-321.

This sequence belongs to the glycosyltransferase 31 family. Mn(2+) is required as a cofactor. In terms of tissue distribution, detected in all the examined tissues (12.5 dpc). High expression found in adult brain.

Its subcellular location is the golgi apparatus membrane. The catalysed reaction is 3-O-(alpha-L-fucosyl)-L-threonyl-[EGF-like domain protein] + UDP-N-acetyl-alpha-D-glucosamine = 3-O-(N-acetyl-beta-D-glucosaminyl-(1-&gt;3)-alpha-L-fucosyl)-L-threonyl-[EGF-like domain protein] + UDP + H(+). It carries out the reaction 3-O-(alpha-L-fucosyl)-L-seryl-[EGF-like domain protein] + UDP-N-acetyl-alpha-D-glucosamine = 3-O-(N-acetyl-beta-D-glucosaminyl-(1-&gt;3)-alpha-L-fucosyl)-L-seryl-[EGF-like domain protein] + UDP + H(+). In terms of biological role, glycosyltransferase that initiates the elongation of O-linked fucose residues attached to EGF-like repeats in the extracellular domain of Notch molecules. Modulates NOTCH1 activity by modifying O-fucose residues at specific EGF-like domains resulting in enhancement of NOTCH1 activation by DLL1 and JAG1. May be involved in limb formation and in neurogenesis. The chain is Beta-1,3-N-acetylglucosaminyltransferase radical fringe from Mus musculus (Mouse).